The sequence spans 212 residues: Small ribosomal subunit protein eS6 (212 aa).

This sequence belongs to the eukaryotic ribosomal protein eS6 family.

The polypeptide is Small ribosomal subunit protein eS6 (Metallosphaera sedula (strain ATCC 51363 / DSM 5348 / JCM 9185 / NBRC 15509 / TH2)).